Consider the following 95-residue polypeptide: Large ribosomal subunit protein bL27 (95 aa).

The interval 1–25 (MAHKKGTGSTRNGRDSNAQRLGVKR) is disordered. The span at 7 to 19 (TGSTRNGRDSNAQ) shows a compositional bias: polar residues.

This sequence belongs to the bacterial ribosomal protein bL27 family.

The protein is Large ribosomal subunit protein bL27 of Gloeobacter violaceus (strain ATCC 29082 / PCC 7421).